The chain runs to 817 residues: TPR repeat-containing protein C19B12.01 (817 aa).

Disordered regions lie at residues 276-298 (DQKS…PNHP) and 386-413 (GKSP…DGEN). 4 TPR repeats span residues 459 to 492 (LQMW…DPYD), 521 to 554 (APAQ…NPLS), 555 to 588 (YPTW…NPED), and 625 to 658 (WRIW…KGKD).

In Schizosaccharomyces pombe (strain 972 / ATCC 24843) (Fission yeast), this protein is TPR repeat-containing protein C19B12.01.